The chain runs to 86 residues: Polcalcin Nic t 2 (86 aa).

EF-hand domains are found at residues 8–42 (QDIADRERIFKRFDANGDGQISATELGETLQTLGS) and 43–78 (VTPEEVKYMMDEIDTNKDGFISFQEFIEFARANRGL). Residues D21, N23, D25, Q27, E32, D56, N58, D60, and E67 each contribute to the Ca(2+) site.

This Nicotiana tabacum (Common tobacco) protein is Polcalcin Nic t 2 (Nict2).